The following is a 209-amino-acid chain: Ribosomal RNA large subunit methyltransferase E (209 aa).

Residues G63, W65, D83, D99, and D124 each coordinate S-adenosyl-L-methionine. Residue K164 is the Proton acceptor of the active site.

Belongs to the class I-like SAM-binding methyltransferase superfamily. RNA methyltransferase RlmE family.

The protein localises to the cytoplasm. It carries out the reaction uridine(2552) in 23S rRNA + S-adenosyl-L-methionine = 2'-O-methyluridine(2552) in 23S rRNA + S-adenosyl-L-homocysteine + H(+). In terms of biological role, specifically methylates the uridine in position 2552 of 23S rRNA at the 2'-O position of the ribose in the fully assembled 50S ribosomal subunit. The chain is Ribosomal RNA large subunit methyltransferase E from Tolumonas auensis (strain DSM 9187 / NBRC 110442 / TA 4).